The sequence spans 261 residues: Mannose-specific lectin 2 (261 aa).

Residues Met-1 to Ala-23 form the signal peptide. 2 consecutive Bulb-type lectin domains span residues Thr-26–Pro-131 and Asp-145–Ser-252. Beta-D-mannose contacts are provided by residues Gln-51–Asn-55, Tyr-59, Trp-63, Gln-64, Gln-170–Asn-174, Tyr-178, and Tyr-182–Gln-185. The Carbohydrate-binding motif 1 motif lies at Gln-51–Tyr-59. 2 cysteine pairs are disulfide-bonded: Cys-54–Cys-74 and Cys-173–Cys-195. The short motif at Gln-170–Tyr-178 is the Carbohydrate-binding motif 2 element.

Forms heterotetramer of 2 chains 1 and 2 chains 2 arranged as a dimer of chain 1 and chain 2 heterodimers.

Functionally, mannose-specific lectin. Shows agglutinating activity towards erythrocytes from rabbit. This Colocasia esculenta (Wild taro) protein is Mannose-specific lectin 2.